We begin with the raw amino-acid sequence, 174 residues long: Thioredoxin O, mitochondrial (174 aa).

A mitochondrion-targeting transit peptide spans M1–S59. The region spanning G60–K172 is the Thioredoxin domain. Catalysis depends on nucleophile residues C96 and C99. Cysteines 96 and 99 form a disulfide.

This sequence belongs to the thioredoxin family. Plant O-type subfamily.

Its subcellular location is the mitochondrion. In terms of biological role, probable thiol-disulfide oxidoreductase that may participate in various redox reactions. The sequence is that of Thioredoxin O, mitochondrial from Oryza sativa subsp. japonica (Rice).